Here is a 1929-residue protein sequence, read N- to C-terminus: Intraflagellar transport protein 140 (1929 aa).

WD repeat units follow at residues 76 to 116 (QVQV…PSYK) and 119 to 158 (LHQE…YSFE). The interval 774 to 795 (LSTPDTGSPAVEAEESPQRQTR) is disordered. 3 LRR repeats span residues 957 to 980 (STSL…TFTK), 1019 to 1044 (ISLL…SLAE), and 1510 to 1532 (AQSL…LADI).

The protein resides in the cell projection. Its subcellular location is the cilium. It is found in the flagellum. It localises to the cytoplasm. The protein localises to the cytoskeleton. The protein resides in the flagellum axoneme. Its subcellular location is the flagellum basal body. Its function is as follows. Component of the intraflagellar transport complex A (IFT-A) involved in flagellar assembly. This Giardia intestinalis (strain ATCC 50803 / WB clone C6) (Giardia lamblia) protein is Intraflagellar transport protein 140.